The primary structure comprises 556 residues: ATP synthase subunit beta-2, mitochondrial (556 aa).

Residues 1-20 (MASRRVLSSLLRSSSGRSAA) are compositionally biased toward low complexity. The tract at residues 1–37 (MASRRVLSSLLRSSSGRSAAKLVNRNPRLPSPSPARH) is disordered. The N-terminal 51 residues, 1–51 (MASRRVLSSLLRSSSGRSAAKLVNRNPRLPSPSPARHAAPCSYLLGRVAEY), are a transit peptide targeting the mitochondrion. Serine 59 carries the post-translational modification Phosphoserine. 231 to 238 (GGAGVGKT) serves as a coordination point for ATP.

This sequence belongs to the ATPase alpha/beta chains family. In terms of assembly, F-type ATPases have 2 components, CF(1) - the catalytic core - and CF(0) - the membrane proton channel. CF(1) has five subunits: alpha(3), beta(3), gamma(1), delta(1), epsilon(1). CF(0) has three main subunits: a, b and c.

It is found in the mitochondrion. The protein resides in the mitochondrion inner membrane. It catalyses the reaction ATP + H2O + 4 H(+)(in) = ADP + phosphate + 5 H(+)(out). Functionally, mitochondrial membrane ATP synthase (F(1)F(0) ATP synthase or Complex V) produces ATP from ADP in the presence of a proton gradient across the membrane which is generated by electron transport complexes of the respiratory chain. F-type ATPases consist of two structural domains, F(1) - containing the extramembraneous catalytic core, and F(0) - containing the membrane proton channel, linked together by a central stalk and a peripheral stalk. During catalysis, ATP synthesis in the catalytic domain of F(1) is coupled via a rotary mechanism of the central stalk subunits to proton translocation. Subunits alpha and beta form the catalytic core in F(1). Rotation of the central stalk against the surrounding alpha(3)beta(3) subunits leads to hydrolysis of ATP in three separate catalytic sites on the beta subunits. The chain is ATP synthase subunit beta-2, mitochondrial from Arabidopsis thaliana (Mouse-ear cress).